We begin with the raw amino-acid sequence, 138 residues long: Large ribosomal subunit protein uL16 (138 aa).

The protein belongs to the universal ribosomal protein uL16 family. Part of the 50S ribosomal subunit.

Functionally, binds 23S rRNA and is also seen to make contacts with the A and possibly P site tRNAs. This chain is Large ribosomal subunit protein uL16, found in Anaeromyxobacter dehalogenans (strain 2CP-1 / ATCC BAA-258).